A 242-amino-acid polypeptide reads, in one-letter code: Segregation and condensation protein A (242 aa).

It belongs to the ScpA family. Component of a cohesin-like complex composed of ScpA, ScpB and the Smc homodimer, in which ScpA and ScpB bind to the head domain of Smc. The presence of the three proteins is required for the association of the complex with DNA.

It localises to the cytoplasm. Functionally, participates in chromosomal partition during cell division. May act via the formation of a condensin-like complex containing Smc and ScpB that pull DNA away from mid-cell into both cell halves. The sequence is that of Segregation and condensation protein A from Lactococcus lactis subsp. lactis (strain IL1403) (Streptococcus lactis).